We begin with the raw amino-acid sequence, 101 residues long: NAD(P)H-quinone oxidoreductase subunit 4L, chloroplastic (101 aa).

Transmembrane regions (helical) follow at residues 2–22, 32–52, and 61–81; these read MLEH…YGLI, MCLE…SDFF, and ILSI…LAIV.

The protein belongs to the complex I subunit 4L family. NDH is composed of at least 16 different subunits, 5 of which are encoded in the nucleus.

It localises to the plastid. It is found in the chloroplast thylakoid membrane. It carries out the reaction a plastoquinone + NADH + (n+1) H(+)(in) = a plastoquinol + NAD(+) + n H(+)(out). The enzyme catalyses a plastoquinone + NADPH + (n+1) H(+)(in) = a plastoquinol + NADP(+) + n H(+)(out). Functionally, NDH shuttles electrons from NAD(P)H:plastoquinone, via FMN and iron-sulfur (Fe-S) centers, to quinones in the photosynthetic chain and possibly in a chloroplast respiratory chain. The immediate electron acceptor for the enzyme in this species is believed to be plastoquinone. Couples the redox reaction to proton translocation, and thus conserves the redox energy in a proton gradient. The protein is NAD(P)H-quinone oxidoreductase subunit 4L, chloroplastic of Buxus microphylla (Littleleaf boxwood).